Reading from the N-terminus, the 362-residue chain is P2Y purinoceptor 1 (362 aa).

Over 1–40 (MTEALISAALNGTQPELLAGGWAAGNATTKCSLTKTGFQF) the chain is Extracellular. 2 N-linked (GlcNAc...) asparagine glycosylation sites follow: Asn-11 and Asn-26. Disulfide bonds link Cys-31-Cys-285 and Cys-113-Cys-191. Lys-35 lines the ADP pocket. A helical transmembrane segment spans residues 41 to 63 (YYLPTVYILVFITGFLGNSVAIW). At 64–76 (MFVFHMRPWSGIS) the chain is on the cytoplasmic side. Residues 77 to 98 (VYMFNLALADFLYVLTLPALIF) form a helical membrane-spanning segment. Residues 99 to 114 (YYFNKTDWIFGDVMCK) are Extracellular-facing. Asn-102 carries an N-linked (GlcNAc...) asparagine glycan. A helical transmembrane segment spans residues 115-136 (LQRFIFHVNLYGSILFLTCISV). At 137–155 (HRYTGVVHPLKSLGRLKKK) the chain is on the cytoplasmic side. A helical membrane pass occupies residues 156–177 (NAVYVSSLVWALVVAVIAPILF). Residues 178-203 (YSGTGVRRNKTITCYDTTADEYLRSY) lie on the Extracellular side of the membrane. Asn-186 carries an N-linked (GlcNAc...) asparagine glycan. 192 to 194 (YDT) contacts ADP. The helical transmembrane segment at 204–226 (FVYSMCTTVFMFCIPFIVILGCY) threads the bilayer. Residues 227-249 (GLIVKALIYKDLDNSPLRRKSIY) are Cytoplasmic-facing. Residues 250–273 (LVIIVLTVFAVSYLPFHVMKTLNL) traverse the membrane as a helical segment. ADP is bound by residues 272–276 (NLRAR), 292–295 (YATY), and Arg-299. Over 274 to 292 (RARLDFQTPQMCAFNDKVY) the chain is Extracellular. A helical membrane pass occupies residues 293–314 (ATYQVTRGLASLNSCVDPILYF). The Cytoplasmic portion of the chain corresponds to 315 to 362 (LAGDTFRRRLSRATRKSSRRSEPNVQSKSEEMTLNILTEYKQNGDTSL).

Belongs to the G-protein coupled receptor 1 family. Brain, spinal cord, gastrointestinal tract, spleen and leg muscle. Is not detected in the heart, liver, stomach, lung and kidney.

The protein localises to the cell membrane. Its function is as follows. Receptor for extracellular adenine nucleotides such as ADP. In platelets, binding to ADP leads to mobilization of intracellular calcium ions via activation of phospholipase C, a change in platelet shape, and ultimately platelet aggregation. The chain is P2Y purinoceptor 1 (P2RY1) from Gallus gallus (Chicken).